The chain runs to 492 residues: 2,3-bisphosphoglycerate-independent phosphoglycerate mutase (492 aa).

Asp-11 and Ser-61 together coordinate Mn(2+). The Phosphoserine intermediate role is filled by Ser-61. Residues His-118, 147–148, Arg-177, Arg-183, 248–251, and Lys-321 each bind substrate; these read RD and RNDR. Asp-387, His-391, Asp-428, His-429, and His-446 together coordinate Mn(2+).

It belongs to the BPG-independent phosphoglycerate mutase family. Monomer. It depends on Mn(2+) as a cofactor.

It carries out the reaction (2R)-2-phosphoglycerate = (2R)-3-phosphoglycerate. The protein operates within carbohydrate degradation; glycolysis; pyruvate from D-glyceraldehyde 3-phosphate: step 3/5. In terms of biological role, catalyzes the interconversion of 2-phosphoglycerate and 3-phosphoglycerate. The protein is 2,3-bisphosphoglycerate-independent phosphoglycerate mutase of Helicobacter acinonychis (strain Sheeba).